The sequence spans 908 residues: DNA mismatch repair protein MutS (908 aa).

An ATP-binding site is contributed by Gly-629–Ser-636. A disordered region spans residues Ala-822 to Asn-863.

It belongs to the DNA mismatch repair MutS family.

Functionally, this protein is involved in the repair of mismatches in DNA. It is possible that it carries out the mismatch recognition step. This protein has a weak ATPase activity. This chain is DNA mismatch repair protein MutS, found in Salinibacter ruber (strain DSM 13855 / M31).